Consider the following 386-residue polypeptide: DNA-directed RNA polymerase subunit Rpo1C (386 aa).

The protein belongs to the RNA polymerase beta' chain family. As to quaternary structure, part of the RNA polymerase complex.

The protein resides in the cytoplasm. The catalysed reaction is RNA(n) + a ribonucleoside 5'-triphosphate = RNA(n+1) + diphosphate. Functionally, DNA-dependent RNA polymerase (RNAP) catalyzes the transcription of DNA into RNA using the four ribonucleoside triphosphates as substrates. Forms part of the jaw domain. This chain is DNA-directed RNA polymerase subunit Rpo1C, found in Methanococcus maripaludis (strain C7 / ATCC BAA-1331).